A 77-amino-acid chain; its full sequence is Large ribosomal subunit protein eL14 (77 aa).

It belongs to the eukaryotic ribosomal protein eL14 family.

This chain is Large ribosomal subunit protein eL14, found in Methanococcus maripaludis (strain C6 / ATCC BAA-1332).